The chain runs to 530 residues: Type 2 DNA topoisomerase 6 subunit B (530 aa).

Residues N42, D76, 97–98, 106–113, and K427 each bind ATP; these read SK and GMYGLGVK.

The protein belongs to the TOP6B family. Homodimer. Heterotetramer of two Top6A and two Top6B chains.

It catalyses the reaction ATP-dependent breakage, passage and rejoining of double-stranded DNA.. Its function is as follows. Relaxes both positive and negative superturns and exhibits a strong decatenase activity. The chain is Type 2 DNA topoisomerase 6 subunit B from Saccharolobus solfataricus (strain ATCC 35092 / DSM 1617 / JCM 11322 / P2) (Sulfolobus solfataricus).